The primary structure comprises 983 residues: Inner tegument protein (983 aa).

An interaction with large tegument protein region spans residues 474-983; that stretch reads LNVNTHFAVQ…TSVSLPPASP (510 aa). The segment at 902-932 is disordered; the sequence is PWESAPQPPRLRMTPDTDHEESTAGATSVPE. Positions 914–923 are enriched in basic and acidic residues; it reads MTPDTDHEES.

Belongs to the herpesviridae inner tegument protein family. In terms of assembly, interacts (via C-terminus) with the large tegument protein/LTP (via N-terminus).

It is found in the virion tegument. The protein resides in the host cytoplasm. Its subcellular location is the host nucleus. It localises to the host Golgi apparatus. The protein localises to the host trans-Golgi network. Plays an essential role in cytoplasmic secondary envelopment during viral egress. Interacts with the capsid via the large tegument protein/LTP and participates in its transport to the host trans-Golgi network (TGN) where secondary envelopment occurs. Modulates tegumentation and capsid accumulation at the viral assembly complex. This Homo sapiens (Human) protein is Inner tegument protein (UL47).